A 111-amino-acid chain; its full sequence is Colipase (111 aa).

The N-terminal stretch at 1-17 (MEKVLALVLLTLAVAYA) is a signal peptide. Residues 18–22 (APDPR) constitute a propeptide, enterostatin, activation peptide. 5 cysteine pairs are disulfide-bonded: C34–C45, C40–C56, C44–C78, C66–C86, and C80–C104.

It belongs to the colipase family. In terms of assembly, forms a 1:1 stoichiometric complex with pancreatic lipase. Expressed by the pancreas.

The protein resides in the secreted. In terms of biological role, colipase is a cofactor of pancreatic lipase. It allows the lipase to anchor itself to the lipid-water interface. Without colipase the enzyme is washed off by bile salts, which have an inhibitory effect on the lipase. Its function is as follows. Enterostatin has a biological activity as a satiety signal. The chain is Colipase (CLPS) from Myocastor coypus (Coypu).